A 938-amino-acid chain; its full sequence is Isoleucine--tRNA ligase (938 aa).

The short motif at 58 to 68 (PYANGSIHIGH) is the 'HIGH' region element. The residue at position 183 (lysine 183) is an N6-acetyllysine. Glutamate 561 is an L-isoleucyl-5'-AMP binding site. The 'KMSKS' region signature appears at 602 to 606 (KMSKS). Position 605 (lysine 605) interacts with ATP. 4 residues coordinate Zn(2+): cysteine 901, cysteine 904, cysteine 921, and cysteine 924.

The protein belongs to the class-I aminoacyl-tRNA synthetase family. IleS type 1 subfamily. Monomer. Zn(2+) is required as a cofactor.

It is found in the cytoplasm. The enzyme catalyses tRNA(Ile) + L-isoleucine + ATP = L-isoleucyl-tRNA(Ile) + AMP + diphosphate. Functionally, catalyzes the attachment of isoleucine to tRNA(Ile). As IleRS can inadvertently accommodate and process structurally similar amino acids such as valine, to avoid such errors it has two additional distinct tRNA(Ile)-dependent editing activities. One activity is designated as 'pretransfer' editing and involves the hydrolysis of activated Val-AMP. The other activity is designated 'posttransfer' editing and involves deacylation of mischarged Val-tRNA(Ile). The sequence is that of Isoleucine--tRNA ligase from Escherichia coli O127:H6 (strain E2348/69 / EPEC).